Here is a 1136-residue protein sequence, read N- to C-terminus: 3-O-alpha-D-galactosyl-alpha-L-arabinofuranosidase (1136 aa).

Positions 1-36 are cleaved as a signal peptide; sequence MGISRNRLVPGLVGLAASAAIVLPLGIGMPVSSATA. Glutamate 194 (proton donor) is an active-site residue. Glutamate 321 functions as the Nucleophile in the catalytic mechanism. CBM6 domains are found at residues 521-656 and 669-779; these read QAIE…LLLY and VTYP…VTTA. Residues 987–1045 form the BIG2 domain; that stretch reads KASLKVGETLSLNASVTPDSVADKTVQWTSSDEQVATVDEHGVVKGVKAGTVTITATSV. Residues 1049 to 1104 are disordered; that stretch reads SRSGSVEVTVAEDSEQKPSGGDGDNNGEQTGKPDGNTGGQTSDSDAGADSGNNQKH. Polar residues predominate over residues 1087–1103; it reads GQTSDSDAGADSGNNQK. Residues 1109 to 1129 form a helical membrane-spanning segment; the sequence is GAAVAAVAGVAVLLAGAGLLL.

The protein belongs to the glycosyl hydrolase 39 family.

It localises to the cell membrane. The protein localises to the secreted. Its subcellular location is the cell wall. The enzyme catalyses Hydrolysis of alpha-D-Galp-(1-&gt;3)-L-Araf disaccharides from non-reducing terminals in branches of type II arabinogalactan attached to proteins.. Hydrolase involved in the degradation of the gum arabic arabinogalactan protein (AGP). Catalyzes the release of 3-O-alpha-D-galactopyranosyl-L-arabinose (alpha-D-Galp-(1-&gt;3)-L-Ara) from gum arabic AGP. Can also release 3-O-beta-L-arabinopyranosyl-L-arabinose (beta-L-Arap-(1-&gt;3)-L-Ara) from gum arabic AGP and larch AGP, but the alpha-D-Galp-(1-&gt;3)-L-Ara release activity is 594-fold higher than the beta-L-Arap-(1-&gt;3)-L-Ara release activity. Exhibits no reactivity toward p-nitrophenyl (pNP)-alpha-Araf or any other tested pNP substrate. Plays a crucial role in gum arabic AGP assimilation in B.longum. In Bifidobacterium longum subsp. longum, this protein is 3-O-alpha-D-galactosyl-alpha-L-arabinofuranosidase.